The chain runs to 342 residues: uncharacterized protein (342 aa).

Helical transmembrane passes span 8 to 28, 39 to 59, 79 to 99, 108 to 128, 142 to 162, 175 to 195, 207 to 227, 242 to 262, 276 to 296, and 304 to 324; these read FESS…TSLF, ISFL…MLWI, SSFS…FILI, IFWV…PFYM, GWYI…LIMP, INYF…AVVI, AMAP…VALI, FYIF…MAII, AMSW…THLV, and IVDY…IVTL.

Belongs to the tellurite-resistance/dicarboxylate transporter (TDT) family.

It localises to the cell membrane. This is an uncharacterized protein from Methanocaldococcus jannaschii (strain ATCC 43067 / DSM 2661 / JAL-1 / JCM 10045 / NBRC 100440) (Methanococcus jannaschii).